Consider the following 386-residue polypeptide: DNA-directed RNA polymerase subunit Rpo1C (386 aa).

It belongs to the RNA polymerase beta' chain family. As to quaternary structure, part of the RNA polymerase complex.

The protein resides in the cytoplasm. The enzyme catalyses RNA(n) + a ribonucleoside 5'-triphosphate = RNA(n+1) + diphosphate. In terms of biological role, DNA-dependent RNA polymerase (RNAP) catalyzes the transcription of DNA into RNA using the four ribonucleoside triphosphates as substrates. Forms part of the jaw domain. The chain is DNA-directed RNA polymerase subunit Rpo1C from Methanococcus maripaludis (strain C5 / ATCC BAA-1333).